The chain runs to 156 residues: Small ribosomal subunit protein uS7 (156 aa).

Belongs to the universal ribosomal protein uS7 family. In terms of assembly, part of the 30S ribosomal subunit. Contacts proteins S9 and S11.

Its function is as follows. One of the primary rRNA binding proteins, it binds directly to 16S rRNA where it nucleates assembly of the head domain of the 30S subunit. Is located at the subunit interface close to the decoding center, probably blocks exit of the E-site tRNA. In Alcanivorax borkumensis (strain ATCC 700651 / DSM 11573 / NCIMB 13689 / SK2), this protein is Small ribosomal subunit protein uS7.